Here is a 450-residue protein sequence, read N- to C-terminus: F-box protein KIB3 (450 aa).

The F-box domain maps to 20–50; sequence DLVRLILERLSFVDFHRARCVSSTWYVASKS.

It is found in the cytoplasm. The protein localises to the nucleus. It localises to the nucleolus. In terms of biological role, component of SCF(ASK-cullin-F-box) E3 ubiquitin ligase complexes, which may mediate the ubiquitination and subsequent proteasomal degradation of target proteins. Required for brassinosteroid (BR) signal transduction. Mediates ASK7/BIN2/SK21 inactivation both by competing with substrate binding (e.g. BZR1) and by promoting its ubiquitination and subsequent proteasomal degradation. The polypeptide is F-box protein KIB3 (Arabidopsis thaliana (Mouse-ear cress)).